We begin with the raw amino-acid sequence, 248 residues long: MSEKRPLILLPAVDVVEGRAVRLVQGKAGSETEYGSALDAALGWQRDGAEWIHLVDLDAAFGRGSNRELLADVVGRLDVAVELSGGIRDDESLEAALATGCARVNIGTAALENPQWCAKVVAEFGDKVAVGLDVKIVDDQHRLRGRGWETDGGDLWEVLDRLDSEGCSRYVVTDVTKDGTLQGPNLDLLGRVADRTDAPVIASGGVSSLDDLRAIATLTDRGVEGAIVGKALYAGRFTLPEALAAMGQ.

Residue D14 is the Proton acceptor of the active site. The active-site Proton donor is D133.

This sequence belongs to the HisA/HisF family.

The protein localises to the cytoplasm. It catalyses the reaction 1-(5-phospho-beta-D-ribosyl)-5-[(5-phospho-beta-D-ribosylamino)methylideneamino]imidazole-4-carboxamide = 5-[(5-phospho-1-deoxy-D-ribulos-1-ylimino)methylamino]-1-(5-phospho-beta-D-ribosyl)imidazole-4-carboxamide. The catalysed reaction is N-(5-phospho-beta-D-ribosyl)anthranilate = 1-(2-carboxyphenylamino)-1-deoxy-D-ribulose 5-phosphate. The protein operates within amino-acid biosynthesis; L-histidine biosynthesis; L-histidine from 5-phospho-alpha-D-ribose 1-diphosphate: step 4/9. It functions in the pathway amino-acid biosynthesis; L-tryptophan biosynthesis; L-tryptophan from chorismate: step 3/5. In terms of biological role, involved in both the histidine and tryptophan biosynthetic pathways. In Mycobacterium sp. (strain JLS), this protein is Phosphoribosyl isomerase A.